The primary structure comprises 231 residues: Peroxisomal membrane protein 11E (231 aa).

Over 1–91 the chain is Cytoplasmic; that stretch reads MTTLDLTRAE…LPLVLLGKSK (91 aa). Residues 92–108 form a helical membrane-spanning segment; it reads NALLSTFLFLDQIVWLG. The Lumenal segment spans residues 109–202; the sequence is RSGIYKNKER…LLQLAPKTIS (94 aa). A helical membrane pass occupies residues 203-222; it reads PRVTGAFGFTTSLISCYQLL. Residues 223–231 lie on the Cytoplasmic side of the membrane; the sequence is PSRPKLKTP.

The protein belongs to the peroxin-11 family. As to quaternary structure, homooligomer. Interacts with ARC5 and FIS1B on peroxisomes. Expressed in leaves and developing siliques.

The protein localises to the peroxisome membrane. Functionally, involved in peroxisomal proliferation. Promotes peroxisomal duplication, aggregation or elongation without fission. The polypeptide is Peroxisomal membrane protein 11E (PEX11E) (Arabidopsis thaliana (Mouse-ear cress)).